Reading from the N-terminus, the 118-residue chain is Probable small nuclear ribonucleoprotein Sm D2 (118 aa).

A Sm domain is found at 29–115; the sequence is LSILTNSVKN…VILVVKNPLA (87 aa).

This sequence belongs to the snRNP core protein family.

Its subcellular location is the nucleus. The protein localises to the cytoplasm. The protein resides in the cytosol. Plays a role in pre-mRNA splicing as a core component of the spliceosomal U1, U2, U4 and U5 small nuclear ribonucleoproteins (snRNPs), the building blocks of the spliceosome. This is Probable small nuclear ribonucleoprotein Sm D2 (snr-4) from Caenorhabditis elegans.